Reading from the N-terminus, the 106-residue chain is UPF0145 protein MA_3383 (106 aa).

This sequence belongs to the UPF0145 family.

This chain is UPF0145 protein MA_3383, found in Methanosarcina acetivorans (strain ATCC 35395 / DSM 2834 / JCM 12185 / C2A).